We begin with the raw amino-acid sequence, 293 residues long: 1D-myo-inositol 2-acetamido-2-deoxy-alpha-D-glucopyranoside deacetylase (293 aa).

His-15, Asp-18, and His-148 together coordinate Zn(2+).

Belongs to the MshB deacetylase family. Requires Zn(2+) as cofactor.

The catalysed reaction is 1D-myo-inositol 2-acetamido-2-deoxy-alpha-D-glucopyranoside + H2O = 1D-myo-inositol 2-amino-2-deoxy-alpha-D-glucopyranoside + acetate. In terms of biological role, catalyzes the deacetylation of 1D-myo-inositol 2-acetamido-2-deoxy-alpha-D-glucopyranoside (GlcNAc-Ins) in the mycothiol biosynthesis pathway. The sequence is that of 1D-myo-inositol 2-acetamido-2-deoxy-alpha-D-glucopyranoside deacetylase from Corynebacterium diphtheriae (strain ATCC 700971 / NCTC 13129 / Biotype gravis).